Reading from the N-terminus, the 446-residue chain is Iroquois homeobox protein 5a (446 aa).

The homeobox DNA-binding region spans 117 to 173 (NATRDATATLKAWLNEHRKNPYPTKGEKIMLAIITKMTLTQVSTWFANARRRLKKEN). The tract at residues 175 to 312 (MTWTPRNRSE…IHSPPSAPKP (138 aa)) is disordered. Over residues 184–201 (EDEEEDENIDLEKNDDDE) the composition is skewed to acidic residues. 2 stretches are compositionally biased toward basic and acidic residues: residues 202 to 220 (PNKP…DHKL) and 227 to 258 (PCDR…RTDL). Composition is skewed to polar residues over residues 264-274 (KPTTSSPSVLQ) and 293-303 (STGNSNVTSVI).

It belongs to the TALE/IRO homeobox family.

The protein localises to the nucleus. Transcription factor. Binds to consensus iroquois binding site (IBS) motifs 5'-ACANNTGT-3' or 5'-ACANNNTGT-3' in regulatory elements of target genes. Required, together with irx7, for hyoid joint formation; they act cell autonomously to repress expression of cartilage matrix genes, such as collagen col2a1a, within immature chondrocytes of the joint interzone. May compete with or modify Sox9a activity, thereby reducing Sox9a-mediated activation of col2a1a. Probably acts in the developing hyoid joint downstream of Bmp signaling. In concert with irx6a, plays a role in visual performance. The sequence is that of Iroquois homeobox protein 5a (irx5a) from Danio rerio (Zebrafish).